Here is a 118-residue protein sequence, read N- to C-terminus: MNNKEIGKLGEDFTIDFLNKRGFIILERNYKVPLGEVDIIAQKGDLLIFIEVKTRRNLDFGIPAEAVDRTKQTRIKKIAELYISTKKPKFKKIRFDIMSIILSKSGKILDWEYLINAF.

The protein belongs to the UPF0102 family.

This Dictyoglomus thermophilum (strain ATCC 35947 / DSM 3960 / H-6-12) protein is UPF0102 protein DICTH_1420.